The chain runs to 1072 residues: Zn(2)-C6 fungal-type transcription factor FTF1a (1072 aa).

Residues 178–205 constitute a DNA-binding region (zn(2)-C6 fungal-type); that stretch reads CMACRRKKIRCSGEKPACKHCLRSRILC.

Its subcellular location is the nucleus. Functionally, zn(2)-C6 fungal-type transcription factor that has a role in the establishment of the fungus within the plant and/or the progress of the disease. Regulates the expression of virulence factors such as SIX1 and SIX6. This chain is Zn(2)-C6 fungal-type transcription factor FTF1a, found in Fusarium oxysporum f. sp. lycopersici (strain 4287 / CBS 123668 / FGSC 9935 / NRRL 34936) (Fusarium vascular wilt of tomato).